Reading from the N-terminus, the 114-residue chain is MGCRLLCCAVLCLLGAVPMETGVTQTPRHLVMGMTNKKSLKCEQHLGHNAMYWYKQSAKKPLELMFVYNFKEQTENNSVPSRFSPECPNSSHLFLHLHTLQPEDSALYLCASSQ.

Residues 1–21 form the signal peptide; sequence MGCRLLCCAVLCLLGAVPMET. Residues 22-114 enclose the Ig-like domain; the sequence is GVTQTPRHLV…SALYLCASSQ (93 aa). The cysteines at positions 42 and 110 are disulfide-linked. N-linked (GlcNAc...) asparagine glycans are attached at residues Asn-76 and Asn-89.

As to quaternary structure, alpha-beta TR is a heterodimer composed of an alpha and beta chain; disulfide-linked. The alpha-beta TR is associated with the transmembrane signaling CD3 coreceptor proteins to form the TR-CD3 (TcR or TCR). The assembly of alpha-beta TR heterodimers with CD3 occurs in the endoplasmic reticulum where a single alpha-beta TR heterodimer associates with one CD3D-CD3E heterodimer, one CD3G-CD3E heterodimer and one CD247 homodimer forming a stable octameric structure. CD3D-CD3E and CD3G-CD3E heterodimers preferentially associate with TR alpha and TR beta chains, respectively. The association of the CD247 homodimer is the last step of TcR assembly in the endoplasmic reticulum and is required for transport to the cell surface.

It localises to the cell membrane. Functionally, v region of the variable domain of T cell receptor (TR) beta chain that participates in the antigen recognition. Alpha-beta T cell receptors are antigen specific receptors which are essential to the immune response and are present on the cell surface of T lymphocytes. Recognize peptide-major histocompatibility (MH) (pMH) complexes that are displayed by antigen presenting cells (APC), a prerequisite for efficient T cell adaptive immunity against pathogens. Binding of alpha-beta TR to pMH complex initiates TR-CD3 clustering on the cell surface and intracellular activation of LCK that phosphorylates the ITAM motifs of CD3G, CD3D, CD3E and CD247 enabling the recruitment of ZAP70. In turn ZAP70 phosphorylates LAT, which recruits numerous signaling molecules to form the LAT signalosome. The LAT signalosome propagates signal branching to three major signaling pathways, the calcium, the mitogen-activated protein kinase (MAPK) kinase and the nuclear factor NF-kappa-B (NF-kB) pathways, leading to the mobilization of transcription factors that are critical for gene expression and essential for T cell growth and differentiation. The T cell repertoire is generated in the thymus, by V-(D)-J rearrangement. This repertoire is then shaped by intrathymic selection events to generate a peripheral T cell pool of self-MH restricted, non-autoaggressive T cells. Post-thymic interaction of alpha-beta TR with the pMH complexes shapes TR structural and functional avidity. In Homo sapiens (Human), this protein is T cell receptor beta variable 4-2.